A 118-amino-acid chain; its full sequence is MGNRAFKSHHGHFLSAEGEAVKTHHGHHDHHTHFHVENHGGKVALKTHCGKYLSIGDHKQVYLSHHLHGDHSLFHLEHHGGKVSIKGHHHHYISADHHGHVSTKEHHDHDTTFEEIII.

Gly2 is lipidated: N-myristoyl glycine. The contains several HHXH repeats stretch occupies residues 8–109 (SHHGHFLSAE…HVSTKEHHDH (102 aa)). 2 tandem repeats follow at residues 34–46 (FHVE…VALK) and 74–86 (FHLE…VSIK). A 2 X 13 AA approximate repeats region spans residues 34-86 (FHVENHGGKVALKTHCGKYLSIGDHKQVYLSHHLHGDHSLFHLEHHGGKVSIK).

This sequence belongs to the hisactophilin family. Homodimer or heterodimer of hatA and hatB, linked by a disulfide bond. Phosphorylated.

It localises to the cytoplasm. The protein resides in the cell membrane. Functionally, may act as an intracellular pH sensor that links chemotactic signals to responses in the microfilament system of the cells by nucleating actin polymerization or stabilizing the filaments. The chain is Hisactophilin-1 (hatA) from Dictyostelium discoideum (Social amoeba).